The sequence spans 314 residues: Olfactory receptor 5I1 (314 aa).

Residues 1–27 (MEFTDRNYTLVTEFILLGFPTRPELQI) are Extracellular-facing. N7 is a glycosylation site (N-linked (GlcNAc...) asparagine). A helical transmembrane segment spans residues 28–48 (VLFLMFLTLYAIILIGNIGLM). Over 49-56 (LLIRIDPH) the chain is Cytoplasmic. Residues 57–77 (LQTPMYFFLSNLSFVDLCYFS) traverse the membrane as a helical segment. Residues 78–101 (DIVPKMLVNFLSENKSISYYGCAL) lie on the Extracellular side of the membrane. C99 and C191 are oxidised to a cystine. The chain crosses the membrane as a helical span at residues 102 to 122 (QFYFFCTFADTESFILAAMAY). At 123 to 141 (DRYVAICNPLLYTVVMSRG) the chain is on the cytoplasmic side. Residues 142-162 (ICMRLIVLSYLGGNMSSLVHT) form a helical membrane-spanning segment. Over 163–198 (SFAFILKYCDKNVINHFFCDLPPLLKLSCTDTTINE) the chain is Extracellular. A helical membrane pass occupies residues 199-219 (WLLSTYGSSVEIICFIIIIIS). Residues 220 to 239 (YFFILLSVLKIRSFSGRKKT) lie on the Cytoplasmic side of the membrane. The helical transmembrane segment at 240-260 (FSTCASHLTSVTIYQGTLLFI) threads the bilayer. The Extracellular portion of the chain corresponds to 261 to 273 (YSRPSYLYSPNTD). Residues 274–294 (KIISVFYTIFIPVLNPLIYSL) form a helical membrane-spanning segment. Residues 295–314 (RNKDVKDAAEKVLRSKVDSS) are Cytoplasmic-facing.

The protein belongs to the G-protein coupled receptor 1 family.

The protein localises to the cell membrane. Its function is as follows. Odorant receptor. This Homo sapiens (Human) protein is Olfactory receptor 5I1 (OR5I1).